We begin with the raw amino-acid sequence, 349 residues long: tRNA pseudouridine synthase D (349 aa).

Position 27 (phenylalanine 27) interacts with substrate. Residue aspartate 80 is the Nucleophile of the active site. Asparagine 129 lines the substrate pocket. Residues 155 to 303 (GVPNYFGAQR…VEAARRAMLL (149 aa)) form the TRUD domain. Phenylalanine 329 lines the substrate pocket.

The protein belongs to the pseudouridine synthase TruD family.

It catalyses the reaction uridine(13) in tRNA = pseudouridine(13) in tRNA. Responsible for synthesis of pseudouridine from uracil-13 in transfer RNAs. The chain is tRNA pseudouridine synthase D from Shigella flexneri.